Here is a 360-residue protein sequence, read N- to C-terminus: DNA replication and repair protein RecF (360 aa).

ATP is bound at residue 33–40 (GENGSGKT).

Belongs to the RecF family.

The protein localises to the cytoplasm. The RecF protein is involved in DNA metabolism; it is required for DNA replication and normal SOS inducibility. RecF binds preferentially to single-stranded, linear DNA. It also seems to bind ATP. This chain is DNA replication and repair protein RecF, found in Rickettsia bellii (strain OSU 85-389).